Reading from the N-terminus, the 214-residue chain is Cytochrome b (214 aa).

4 consecutive transmembrane segments (helical) span residues phenylalanine 31–isoleucine 51, tryptophan 75–isoleucine 96, tryptophan 111–leucine 131, and phenylalanine 176–leucine 196. Heme b contacts are provided by histidine 81 and histidine 95. Positions 180 and 194 each coordinate heme b. Histidine 199 is a binding site for a ubiquinone.

Belongs to the cytochrome b family. In terms of assembly, the cytochrome bc1 complex contains 3 respiratory subunits (MT-CYB, CYC1 and UQCRFS1), 2 core proteins (UQCRC1 and UQCRC2) and probably 6 low-molecular weight proteins. Requires heme b as cofactor.

Its subcellular location is the mitochondrion inner membrane. In terms of biological role, component of the ubiquinol-cytochrome c reductase complex (complex III or cytochrome b-c1 complex) that is part of the mitochondrial respiratory chain. The b-c1 complex mediates electron transfer from ubiquinol to cytochrome c. Contributes to the generation of a proton gradient across the mitochondrial membrane that is then used for ATP synthesis. The chain is Cytochrome b (MT-CYB) from Bothrops atrox (Barba amarilla).